Reading from the N-terminus, the 1359-residue chain is Probable protein NAP1 (1359 aa).

The disordered stretch occupies residues 1267-1359; that stretch reads PSMKQNRADT…VSRSGPLSYK (93 aa). 2 stretches are compositionally biased toward basic and acidic residues: residues 1272–1282 and 1300–1310; these read NRADTTPRSHT and EGDRRTGERQL.

It belongs to the HEM-1/HEM-2 family. In terms of assembly, binds PIR.

In terms of biological role, involved in regulation of actin and microtubule organization. Part of a WAVE complex that activates the Arp2/3 complex. This is Probable protein NAP1 (NAP1) from Oryza sativa subsp. japonica (Rice).